The following is an 891-amino-acid chain: Mating-type protein A-alpha Y1 (891 aa).

The segment at residues 146 to 205 (SKKPRPKFHSEYTPLLELYFRFNAYPTYADRRVLAEKTGMLTRQITVWFQNHRRRAKGPL) is a DNA-binding region (homeobox). 5 disordered regions span residues 241–291 (PITL…PSTL), 319–339 (DIEMKDSSKPKRRKMKKLPKG), 393–437 (TRKP…RRVS), 610–718 (ARRK…EQSL), and 800–822 (MNWTASVGSNAQDPASQESGGDE). Positions 244–257 (LGNNKTPDLTTSSR) are enriched in polar residues. Residues 328-337 (PKRRKMKKLP) are compositionally biased toward basic residues. Over residues 427–437 (ASSTVPSRRVS) the composition is skewed to low complexity. The span at 627–638 (KKDKKERKKAGL) shows a compositional bias: basic residues. 2 stretches are compositionally biased toward low complexity: residues 651-667 (VSSRASSLDSDVSTSAR) and 676-710 (QPSSSSRASSVASSGRTPSLSSTSSRRSSGMSMPS). Over residues 800–818 (MNWTASVGSNAQDPASQES) the composition is skewed to polar residues.

It is found in the nucleus. In terms of biological role, specifies A-alpha-1 mating-type. May regulate the expression of genes specific to the homokaryotic cell type. The protein is Mating-type protein A-alpha Y1 of Schizophyllum commune (Split gill fungus).